A 147-amino-acid polypeptide reads, in one-letter code: Urease accessory protein UreE (147 aa).

The protein belongs to the UreE family.

It localises to the cytoplasm. Functionally, involved in urease metallocenter assembly. Binds nickel. Probably functions as a nickel donor during metallocenter assembly. This chain is Urease accessory protein UreE, found in Marinomonas sp. (strain MWYL1).